A 137-amino-acid polypeptide reads, in one-letter code: UPF0768 protein C1952.04c (137 aa).

A compositionally biased stretch (basic and acidic residues) spans 79 to 93 (QRRRREDLPTPERPE). The interval 79 to 137 (QRRRREDLPTPERPEASAQQHAFFPGSSSQQTDIPNVRPQPHIPPPRKSDEAPPPYSYK) is disordered. Positions 119–137 (PHIPPPRKSDEAPPPYSYK) are enriched in pro residues.

This sequence belongs to the UPF0768 family.

This Schizosaccharomyces pombe (strain 972 / ATCC 24843) (Fission yeast) protein is UPF0768 protein C1952.04c.